Consider the following 227-residue polypeptide: Ribosomal RNA large subunit methyltransferase E (227 aa).

Positions 78, 80, 103, 119, and 143 each coordinate S-adenosyl-L-methionine. The active-site Proton acceptor is the K183.

The protein belongs to the class I-like SAM-binding methyltransferase superfamily. RNA methyltransferase RlmE family.

It localises to the cytoplasm. The catalysed reaction is uridine(2552) in 23S rRNA + S-adenosyl-L-methionine = 2'-O-methyluridine(2552) in 23S rRNA + S-adenosyl-L-homocysteine + H(+). In terms of biological role, specifically methylates the uridine in position 2552 of 23S rRNA at the 2'-O position of the ribose in the fully assembled 50S ribosomal subunit. The polypeptide is Ribosomal RNA large subunit methyltransferase E (Rickettsia peacockii (strain Rustic)).